We begin with the raw amino-acid sequence, 419 residues long: UDP-N-acetylglucosamine 1-carboxyvinyltransferase 2 (419 aa).

24–25 (KN) provides a ligand contact to phosphoenolpyruvate. Arg94 serves as a coordination point for UDP-N-acetyl-alpha-D-glucosamine. Residue Cys118 is the Proton donor of the active site. Cys118 is subject to 2-(S-cysteinyl)pyruvic acid O-phosphothioketal. Residues 123–127 (RPIDQ), Asp307, and Ile329 each bind UDP-N-acetyl-alpha-D-glucosamine.

It belongs to the EPSP synthase family. MurA subfamily.

The protein resides in the cytoplasm. The catalysed reaction is phosphoenolpyruvate + UDP-N-acetyl-alpha-D-glucosamine = UDP-N-acetyl-3-O-(1-carboxyvinyl)-alpha-D-glucosamine + phosphate. Its pathway is cell wall biogenesis; peptidoglycan biosynthesis. In terms of biological role, cell wall formation. Adds enolpyruvyl to UDP-N-acetylglucosamine. The sequence is that of UDP-N-acetylglucosamine 1-carboxyvinyltransferase 2 from Staphylococcus epidermidis (strain ATCC 35984 / DSM 28319 / BCRC 17069 / CCUG 31568 / BM 3577 / RP62A).